The chain runs to 70 residues: Movement protein TGBp3 (70 aa).

Residues 1–4 are Lumenal-facing; sequence MEVN. The chain crosses the membrane as a helical span at residues 5–27; sequence TYLNAIILVLVVTIIAVISTSLV. Residues 28–70 lie on the Cytoplasmic side of the membrane; that stretch reads RTEPCVIKITGESITVLACKLDAETIKAIADLKPLSVERLSFH.

This sequence belongs to the Tymovirales TGBp3 protein family.

The protein resides in the host endoplasmic reticulum membrane. Plays a role in viral cell-to-cell propagation, by facilitating genome transport to neighboring plant cells through plasmosdesmata. May induce the formation of granular vesicles derived from the endoplasmic reticulum, which align on actin filaments. The protein is Movement protein TGBp3 of Brassica campestris (Field mustard).